The primary structure comprises 488 residues: Proline--tRNA ligase (488 aa).

It belongs to the class-II aminoacyl-tRNA synthetase family. ProS type 3 subfamily. Homodimer.

It localises to the cytoplasm. The enzyme catalyses tRNA(Pro) + L-proline + ATP = L-prolyl-tRNA(Pro) + AMP + diphosphate. Functionally, catalyzes the attachment of proline to tRNA(Pro) in a two-step reaction: proline is first activated by ATP to form Pro-AMP and then transferred to the acceptor end of tRNA(Pro). Can inadvertently accommodate and process cysteine. The protein is Proline--tRNA ligase (proS) of Borreliella burgdorferi (strain ATCC 35210 / DSM 4680 / CIP 102532 / B31) (Borrelia burgdorferi).